The sequence spans 370 residues: Putative agmatine deiminase (370 aa).

Polar residues predominate over residues methionine 1 to glycine 19. Positions methionine 1–phenylalanine 20 are disordered. Cysteine 361 serves as the catalytic Amidino-cysteine intermediate.

This sequence belongs to the agmatine deiminase family.

It catalyses the reaction agmatine + H2O = N-carbamoylputrescine + NH4(+). This is Putative agmatine deiminase from Shewanella frigidimarina (strain NCIMB 400).